The primary structure comprises 172 residues: Large ribosomal subunit protein uL10 (172 aa).

It belongs to the universal ribosomal protein uL10 family. Part of the ribosomal stalk of the 50S ribosomal subunit. The N-terminus interacts with L11 and the large rRNA to form the base of the stalk. The C-terminus forms an elongated spine to which L12 dimers bind in a sequential fashion forming a multimeric L10(L12)X complex.

In terms of biological role, forms part of the ribosomal stalk, playing a central role in the interaction of the ribosome with GTP-bound translation factors. The protein is Large ribosomal subunit protein uL10 of Rhizobium johnstonii (strain DSM 114642 / LMG 32736 / 3841) (Rhizobium leguminosarum bv. viciae).